We begin with the raw amino-acid sequence, 130 residues long: Fluoride-specific ion channel FluC (130 aa).

The next 4 helical transmembrane spans lie at 2 to 22, 35 to 55, 72 to 92, and 107 to 127; these read GLLL…RFAL, IGIL…AAFL, LFVT…LDIL, and ILVS…FIMG. Positions 79 and 82 each coordinate Na(+).

The protein belongs to the fluoride channel Fluc/FEX (TC 1.A.43) family.

Its subcellular location is the cell inner membrane. It catalyses the reaction fluoride(in) = fluoride(out). With respect to regulation, na(+) is not transported, but it plays an essential structural role and its presence is essential for fluoride channel function. Functionally, fluoride-specific ion channel. Important for reducing fluoride concentration in the cell, thus reducing its toxicity. This Francisella philomiragia subsp. philomiragia (strain ATCC 25017 / CCUG 19701 / FSC 153 / O#319-036) protein is Fluoride-specific ion channel FluC.